The following is a 129-amino-acid chain: Iron-sulfur cluster assembly 1 homolog, mitochondrial (129 aa).

A mitochondrion-targeting transit peptide spans 1–12 (MSASLVRATVRA). Fe cation is bound by residues Cys-57, Cys-121, and Cys-123.

The protein belongs to the HesB/IscA family. In terms of assembly, interacts with CRY2, but not with CRY1 (in vitro).

The protein resides in the mitochondrion. Its function is as follows. Involved in the maturation of mitochondrial 4Fe-4S proteins functioning late in the iron-sulfur cluster assembly pathway. Probably involved in the binding of an intermediate of Fe/S cluster assembly. This chain is Iron-sulfur cluster assembly 1 homolog, mitochondrial (Isca1), found in Rattus norvegicus (Rat).